Here is a 408-residue protein sequence, read N- to C-terminus: uncharacterized protein (408 aa).

Positions asparagine 376–asparagine 386 are enriched in polar residues. Positions asparagine 376–glutamine 408 are disordered. Positions glutamate 389 to glutamate 401 are enriched in basic and acidic residues.

This is an uncharacterized protein from Acanthamoeba polyphaga (Amoeba).